Consider the following 452-residue polypeptide: Tubulin alpha-2/alpha-4 chain (452 aa).

Residue glutamine 11 coordinates GTP. Lysine 40 is subject to N6-acetyllysine. GTP-binding residues include glutamate 71, serine 140, glycine 144, threonine 145, threonine 179, asparagine 206, and asparagine 228. Residue glutamate 71 coordinates Mg(2+). Residue glutamate 254 is part of the active site. Residues 432-452 (YEEVGVDSVEGEGEEEGGEEY) form a disordered region.

This sequence belongs to the tubulin family. As to quaternary structure, dimer of alpha and beta chains. A typical microtubule is a hollow water-filled tube with an outer diameter of 25 nm and an inner diameter of 15 nM. Alpha-beta heterodimers associate head-to-tail to form protofilaments running lengthwise along the microtubule wall with the beta-tubulin subunit facing the microtubule plus end conferring a structural polarity. Microtubules usually have 13 protofilaments but different protofilament numbers can be found in some organisms and specialized cells. Mg(2+) is required as a cofactor. Undergoes a tyrosination/detyrosination cycle, the cyclic removal and re-addition of a C-terminal tyrosine residue by the enzymes tubulin tyrosine carboxypeptidase (TTCP) and tubulin tyrosine ligase (TTL), respectively. In terms of processing, acetylation of alpha chains at Lys-40 stabilizes microtubules and affects affinity and processivity of microtubule motors. This modification has a role in multiple cellular functions, ranging from cell motility, cell cycle progression or cell differentiation to intracellular trafficking and signaling.

The protein localises to the cytoplasm. It localises to the cytoskeleton. It carries out the reaction GTP + H2O = GDP + phosphate + H(+). Tubulin is the major constituent of microtubules, a cylinder consisting of laterally associated linear protofilaments composed of alpha- and beta-tubulin heterodimers. Microtubules grow by the addition of GTP-tubulin dimers to the microtubule end, where a stabilizing cap forms. Below the cap, tubulin dimers are in GDP-bound state, owing to GTPase activity of alpha-tubulin. The sequence is that of Tubulin alpha-2/alpha-4 chain (TUB2) from Patella vulgata (Common limpet).